Reading from the N-terminus, the 440-residue chain is Thymidine phosphorylase (440 aa).

It belongs to the thymidine/pyrimidine-nucleoside phosphorylase family. Homodimer.

It catalyses the reaction thymidine + phosphate = 2-deoxy-alpha-D-ribose 1-phosphate + thymine. It functions in the pathway pyrimidine metabolism; dTMP biosynthesis via salvage pathway; dTMP from thymine: step 1/2. In terms of biological role, the enzymes which catalyze the reversible phosphorolysis of pyrimidine nucleosides are involved in the degradation of these compounds and in their utilization as carbon and energy sources, or in the rescue of pyrimidine bases for nucleotide synthesis. In Cronobacter sakazakii (strain ATCC BAA-894) (Enterobacter sakazakii), this protein is Thymidine phosphorylase.